An 861-amino-acid polypeptide reads, in one-letter code: Glucans biosynthesis glucosyltransferase H (861 aa).

6 helical membrane-spanning segments follow: residues Phe142–Ile162, Val188–Val208, Val516–Leu536, Leu573–Trp593, Phe600–Leu620, and Phe683–Ile703.

The protein belongs to the glycosyltransferase 2 family. OpgH subfamily.

The protein resides in the cell inner membrane. It functions in the pathway glycan metabolism; osmoregulated periplasmic glucan (OPG) biosynthesis. Involved in the biosynthesis of osmoregulated periplasmic glucans (OPGs). The chain is Glucans biosynthesis glucosyltransferase H from Pseudomonas aeruginosa (strain LESB58).